The sequence spans 628 residues: (+)-alpha pinene synthase 1, chloroplastic (628 aa).

The transit peptide at 1–18 (MALVSAVPLNSKLCLCRT) directs the protein to the chloroplast. Mg(2+)-binding residues include aspartate 379, aspartate 383, and aspartate 531. Residues 379–383 (DDIYD) carry the DDXXD motif motif.

Belongs to the terpene synthase family. Tpsd subfamily. Requires Mg(2+) as cofactor. The cofactor is Mn(2+).

The protein resides in the plastid. It localises to the chloroplast. It carries out the reaction (2E)-geranyl diphosphate = (1R,5R)-alpha-pinene + diphosphate. It functions in the pathway terpene metabolism; oleoresin biosynthesis. It participates in secondary metabolite biosynthesis; terpenoid biosynthesis. Functionally, monoterpene synthase (TPS) involved in the biosynthesis of monoterpene natural products included in conifer oleoresin secretions and volatile emissions; these compounds contribute to biotic and abiotic stress defense against herbivores and pathogens. Catalyzes the conversion of (2E)-geranyl diphosphate (GPP) to (+)-alpha-pinene. The chain is (+)-alpha pinene synthase 1, chloroplastic from Pinus banksiana (Jack pine).